The chain runs to 575 residues: Preprotein translocase subunit SCY2, chloroplastic (575 aa).

A chloroplast-targeting transit peptide spans 1-34; the sequence is MNSSQACFFHFSLRPISLSHPSYAFLSKRDPFLC. A run of 10 helical transmembrane segments spans residues 157–177, 206–226, 251–271, 285–305, 306–326, 346–366, 414–434, 447–467, 509–529, and 531–551; these read FVTAVLLVLSRVGYFIPLPGF, LSLFQLGLSPQIIASIIMQVL, IWWLSFFFAIVEALVVAYTSL, VMMTSSLLVCGAMTMTWLCDT, ISESGFGHGSSLIICVGILTG, LPYLLGLLGIFTVVTMFAVVV, TTYLLAFPSILASILGSPFLL, GAPPWVYYSIYAFFVFLFNIF, FWGGLLLSFLATASTVLDHYL, and SINQGFSIGFTSVLIIVGSII.

It belongs to the SecY/SEC61-alpha family. Part of a second Sec protein translocation apparatus. Interacts probably with SECA2. In terms of tissue distribution, ubiquitous.

It localises to the plastid. The protein resides in the chloroplast membrane. The protein localises to the amyloplast membrane. It is found in the chloroplast thylakoid membrane. Functionally, involved in protein export. Probably interacts with other proteins to allow the postimport or conservative sorting pathway for inner membrane proteins in plastids. Central subunit of the protein translocation channel SecYE. Consists of two halves formed by TMs 1-5 and 6-10. These two domains form a lateral gate at the front which open onto the bilayer between TMs 2 and 7, and are clamped together by SecE at the back. The channel is closed by both a pore ring composed of hydrophobic SecY resides and a short helix (helix 2A) on the extracellular side of the membrane which forms a plug. This Arabidopsis thaliana (Mouse-ear cress) protein is Preprotein translocase subunit SCY2, chloroplastic (SCY2).